The chain runs to 712 residues: Polyribonucleotide nucleotidyltransferase (712 aa).

Mg(2+)-binding residues include D487 and D493. The 60-residue stretch at 554 to 613 (PKIITMTINPDKIRDVIGPSGKQINKIIEETGVKIDIEQDGTVFISSINQEMNDKAKKII) folds into the KH domain. Positions 623 to 691 (GEIYEGKVKR…KQGRVNLSRK (69 aa)) constitute an S1 motif domain.

Belongs to the polyribonucleotide nucleotidyltransferase family. Mg(2+) is required as a cofactor.

The protein localises to the cytoplasm. It carries out the reaction RNA(n+1) + phosphate = RNA(n) + a ribonucleoside 5'-diphosphate. In terms of biological role, involved in mRNA degradation. Catalyzes the phosphorolysis of single-stranded polyribonucleotides processively in the 3'- to 5'-direction. This chain is Polyribonucleotide nucleotidyltransferase, found in Bacillus cereus (strain AH187).